The sequence spans 334 residues: Ribosomal RNA large subunit methyltransferase F (334 aa).

A disordered region spans residues methionine 1–histidine 25.

The protein belongs to the methyltransferase superfamily. METTL16/RlmF family.

It is found in the cytoplasm. The catalysed reaction is adenosine(1618) in 23S rRNA + S-adenosyl-L-methionine = N(6)-methyladenosine(1618) in 23S rRNA + S-adenosyl-L-homocysteine + H(+). Functionally, specifically methylates the adenine in position 1618 of 23S rRNA. The sequence is that of Ribosomal RNA large subunit methyltransferase F from Pseudomonas paraeruginosa (strain DSM 24068 / PA7) (Pseudomonas aeruginosa (strain PA7)).